The chain runs to 218 residues: LHFPL tetraspan subfamily member 3 protein (218 aa).

4 helical membrane passes run 22-42 (IGVL…VCFI), 96-116 (FFIG…GLFF), 126-146 (ICAW…MIFP), and 177-197 (ILAI…FVLG).

This sequence belongs to the LHFP family.

It localises to the membrane. In Xenopus laevis (African clawed frog), this protein is LHFPL tetraspan subfamily member 3 protein.